The chain runs to 605 residues: MELALVGNPSNGVAKPSCNSVGSLPVVSSNAVIHPPVTSAAGATLGRHLARRLVQIGATDVFAVPGDFNLTLLDYLIAEPGLKLIGCCNELNAGYAADGYARARGVGACAVTFTVGGLSVLNAIAGAYSENLPVICIVGGPNSNDYGTNRILHHTIGLPDFSQELRCFQTITCYQAVINNLDDAHEQIDTAIATALRESKPVYISVGCNLAGLSHPTFSREPVPLFISPRLSNKANLEYAVEAAADFLNKAVKPVMVGGPKIRVAKAKKAFAGIAESSGYPIAVMPSAKGLVPEHHPRFIGTYWGAVSTTFCAEIVESADAYLFAGPIFNDYSSVGYSLLLKREKAVIVQPDRVVVGNGPAFGCILMTEFLDALAKRLDRNTTAYDNYRRIFIPDREPPNGQPDEPLRVNILFKHIKEMLSGDTAVIAETGDSWFNCQKLRLPEGCGYEFQMQYGSIGWSVGATLGYAQAAKDKRVISCIGDGSFQMTAQDVSTMLRCGQKSIIFLINNGGYTIEVEIHDGPYNVIKNWDYTGLIDAIHNSDGNCWTKKVRTEEELIEAIATATGAKKDCLCFIEIIVHKDDTSKELLEWGSRVSAANSRPPNPQ.

Residues D67 and H154 each contribute to the substrate site. The tract at residues 432–514 (DSWFNCQKLR…FLINNGGYTI (83 aa)) is thiamine pyrophosphate binding. Positions 482, 509, and 511 each coordinate Mg(2+). E515 is a substrate binding site.

Belongs to the TPP enzyme family. Homotetramer. It depends on a metal cation as a cofactor. Thiamine diphosphate is required as a cofactor.

It carries out the reaction a 2-oxocarboxylate + H(+) = an aldehyde + CO2. This Oryza sativa subsp. indica (Rice) protein is Pyruvate decarboxylase 1 (PDC1).